We begin with the raw amino-acid sequence, 201 residues long: MALGSENHSVFNDDEESSSAFNGPSVIRRNARERNRVKQVNNGFSQLRQHIPAAVIADLSNGRRGIGPGANKKLSKVSTLKMAVEYIRRLQKVLHENDQQKQKQLHLQQQHLHFQQQQQHQHLYAWHQELQLQSPTGSTSSCNSISSYCKPATSTIPGATPPNNFHTKLEASFEDYRNNSCSSGTEDEDILDYISLWQDDL.

Over residues 1-10 (MALGSENHSV) the composition is skewed to polar residues. The disordered stretch occupies residues 1–32 (MALGSENHSVFNDDEESSSAFNGPSVIRRNAR). Residues 24 to 90 (PSVIRRNARE…KMAVEYIRRL (67 aa)) enclose the bHLH domain.

As to quaternary structure, efficient DNA binding requires dimerization with another bHLH protein. As to expression, l(1)SC, SC and AC strongly label the presumptive stomatogastric nervous system, while ASE is more prominent in the presumptive procephalic lobe.

Its function is as follows. AS-C proteins are involved in the determination of the neuronal precursors in the peripheral nervous system and the central nervous system. In Drosophila melanogaster (Fruit fly), this protein is Achaete-scute complex protein T5 (ac).